Here is an 822-residue protein sequence, read N- to C-terminus: Calpain-3 (822 aa).

The tract at residues 1–36 (MPTVISASVAPRTGAEPMSPGPIAQAAQDKGTEAGG) is disordered. The Calpain catalytic domain occupies 74 to 418 (LFVDPEFPPD…FTKLEICNLT (345 aa)). Catalysis depends on residues Cys129, His335, and Asn359. The segment at 419–587 (ADALESDKLQ…KRNLSEEVEN (169 aa)) is domain III. The interval 588-650 (TISVDRPVKK…EPGNTDQESE (63 aa)) is linker. The interval 604–652 (IFVSDRANSNKELGVDQETEEGKDNTSPDKQAKSPQLEPGNTDQESEEQ) is disordered. The span at 623 to 635 (EEGKDNTSPDKQA) shows a compositional bias: basic and acidic residues. EF-hand domains follow at residues 650-684 (EEQR…VVNK), 693-726 (FTLE…KKIK), 723-758 (KKIK…AGFH), and 788-822 (VRLE…TMYA). The interval 651 to 822 (EQRQFRNIFR…LEWLQLTMYA (172 aa)) is domain IV. Residues Ala663, Asp666, Glu668, Glu673, Asp706, Asp708, Ser710, Arg712, Glu717, Asp736, Asp738, Ser740, Thr742, Glu747, Asp801, Asp803, Asp805, and Ile807 each coordinate Ca(2+).

The protein belongs to the peptidase C2 family. As to quaternary structure, homodimer; via EF-hand domain 4. Interacts with TTN/titin. Interacts with CMYA5; this interaction, which results in CMYA5 proteolysis, may protect CAPN3 from autolysis. Interacts with SIMC1. Interacts with UTP25; the interaction is required for CAPN3 translocation to the nucleolus. In terms of tissue distribution, skeletal muscle.

The protein localises to the cytoplasm. Its subcellular location is the nucleus. The protein resides in the nucleolus. It catalyses the reaction Broad endopeptidase activity.. Its activity is regulated as follows. Activated by micromolar concentrations of calcium and inhibited by calpastatin. In terms of biological role, calcium-regulated non-lysosomal thiol-protease. Proteolytically cleaves CTBP1. Mediates, with UTP25, the proteasome-independent degradation of p53/TP53. This Bos taurus (Bovine) protein is Calpain-3 (CAPN3).